The following is a 37-amino-acid chain: Large ribosomal subunit protein bL36 (37 aa).

Belongs to the bacterial ribosomal protein bL36 family.

The polypeptide is Large ribosomal subunit protein bL36 (Treponema denticola (strain ATCC 35405 / DSM 14222 / CIP 103919 / JCM 8153 / KCTC 15104)).